Reading from the N-terminus, the 512-residue chain is MSQVYRSTRSSSEDTKSFEEAVIQGLAEDGGLFLPAVIPRLREETLFEHWAHLSFQDLAMEIMKFYIADWEIPAPELRELIERSYSSFRSEEVTPLRKNVTGDDENLHILELFHGPTYAFKDVALQFVGNLFEYFLERKNRDVSEEERTHLTVVGATSGDTGSAAIYGLRGKQDVSVFILYPHGRISPIQEEQMTTVEDENVHTMAIEGSFDNCQDIVKSIFVDEEFNRKHNIAAVNSINWARILAQITYYFYSYFRATDGQPGRVKFIVPSGNFGDILAGFYAKQMGLPIEKLVIATNENDILDRFLREGVYERSEDVTATHSPAMDILVSSNFERLLWFFAREQLAQGDDQEAGSIVNRWFEQLREERRFDVPEHLLDAIRYHFDSERVDNYNTLASIRHIYEHAQNPERYVIDPHTAVGICAANRQIAHDQNNEIHYISLATAHPAKFADAVNEALSSYDDYNFDDVLPDRLRRLGDLEKRIKYVDNTDVDVIKSIIEEELINMGIYNP.

Lys121 carries the N6-(pyridoxal phosphate)lysine modification. Positions 273, 274, 275, 277, and 445 each coordinate pyridoxal 5'-phosphate.

Belongs to the threonine synthase family. It depends on pyridoxal 5'-phosphate as a cofactor.

The enzyme catalyses O-phospho-L-homoserine + H2O = L-threonine + phosphate. The protein operates within amino-acid biosynthesis; L-threonine biosynthesis; L-threonine from L-aspartate: step 5/5. In terms of biological role, catalyzes the gamma-elimination of phosphate from L-phosphohomoserine and the beta-addition of water to produce L-threonine. This chain is Threonine synthase (THR4), found in Eremothecium gossypii (strain ATCC 10895 / CBS 109.51 / FGSC 9923 / NRRL Y-1056) (Yeast).